We begin with the raw amino-acid sequence, 603 residues long: Probable lysosomal cobalamin transporter (603 aa).

9 consecutive transmembrane segments (helical) span residues 13-33, 50-70, 99-119, 150-170, 201-221, 318-338, 353-373, 381-401, and 422-442; these read IWVA…ITVF, IVSL…IALV, IVYY…IPFA, IAFI…PTAA, LLMT…LALL, LFGG…MLIT, GYIL…VKAA, ILMA…IASV, and ALLI…YAVV. N-linked (GlcNAc...) asparagine glycosylation is present at Asn-509. Residues 512-532 traverse the membrane as a helical segment; the sequence is VFGAIDFWAQFAFLTVFLLVF. Asn-543 carries N-linked (GlcNAc...) asparagine glycosylation. A disordered region spans residues 578–603; sequence AKRTVGGHPNGQGYGTSGTNGTASSR. The span at 585–595 shows a compositional bias: gly residues; that stretch reads HPNGQGYGTSG. N-linked (GlcNAc...) asparagine glycosylation is present at Asn-597.

The protein belongs to the LIMR family. LMBRD1 subfamily.

The protein localises to the lysosome membrane. Functionally, probable lysosomal cobalamin transporter. Required to export cobalamin from lysosomes allowing its conversion to cofactors. This Neurospora crassa (strain ATCC 24698 / 74-OR23-1A / CBS 708.71 / DSM 1257 / FGSC 987) protein is Probable lysosomal cobalamin transporter.